Consider the following 164-residue polypeptide: uncharacterized protein (164 aa).

2 CBS domains span residues 9–66 (ATTK…DIDS) and 72–128 (MTKD…VHTM).

This is an uncharacterized protein from Acidianus ambivalens (Desulfurolobus ambivalens).